We begin with the raw amino-acid sequence, 838 residues long: Pentatricopeptide repeat-containing protein At4g19440, chloroplastic (838 aa).

The transit peptide at 1 to 32 (MAALLYFPKISSQMTSSHFISFSPMDLRRLSR) directs the protein to the chloroplast. 16 PPR repeats span residues 238–268 (SKTT…VCKG), 272–306 (DVYL…GVAP), 307–341 (NVVT…GMEP), 342–376 (TLIT…GFPP), 377–411 (NVIV…GLSL), 412–446 (TSST…GFNV), 447–481 (NQGS…NMSP), 482–516 (GGGL…GFVV), 517–551 (DTRT…GCVM), 552–586 (DRVS…GLKP), 587–621 (DNYT…GMLP), 622–656 (DVYT…NVQP), 657–691 (NTVV…GISP), 692–726 (NSAT…GLEP), 727–761 (NVFH…NVHP), and 762–796 (NKIT…GIVP).

The protein belongs to the PPR family. P subfamily.

The protein resides in the plastid. The protein localises to the chloroplast. The chain is Pentatricopeptide repeat-containing protein At4g19440, chloroplastic from Arabidopsis thaliana (Mouse-ear cress).